Reading from the N-terminus, the 117-residue chain is Large ribosomal subunit protein bL20 (117 aa).

This sequence belongs to the bacterial ribosomal protein bL20 family.

Functionally, binds directly to 23S ribosomal RNA and is necessary for the in vitro assembly process of the 50S ribosomal subunit. It is not involved in the protein synthesizing functions of that subunit. The chain is Large ribosomal subunit protein bL20 from Crocosphaera subtropica (strain ATCC 51142 / BH68) (Cyanothece sp. (strain ATCC 51142)).